Reading from the N-terminus, the 359-residue chain is Guanine nucleotide-binding protein alpha-4 subunit (359 aa).

The N-myristoyl glycine moiety is linked to residue Gly2. Residue Cys3 is the site of S-palmitoyl cysteine attachment. The 329-residue stretch at 31 to 359 folds into the G-alpha domain; sequence GEIKLLLLGA…RNNLYLCGLY (329 aa). Positions 34-47 are G1 motif; sequence KLLLLGAGESGKST. Residues 39–46, 178–184, 203–207, 272–275, and Ala331 contribute to the GTP site; these read GAGESGKS, LRARVKS, DVGGQ, and NKMD. Residue Ser46 participates in Mg(2+) binding. Residues 176–184 form a G2 motif region; it reads DILRARVKS. The segment at 199–208 is G3 motif; the sequence is FKMFDVGGQR. A G4 motif region spans residues 268 to 275; that stretch reads ILFLNKMD. The segment at 329 to 334 is G5 motif; sequence TCATDT.

The protein belongs to the G-alpha family. G(i/o/t/z) subfamily. As to quaternary structure, g proteins are composed of 3 units; alpha, beta and gamma. The alpha chain contains the guanine nucleotide binding site. In terms of tissue distribution, expressed in ASI neurons.

In terms of biological role, guanine nucleotide-binding proteins (G proteins) are involved as modulators or transducers in various transmembrane signaling systems. Acts in concert with npr-15 to activate TGF-beta-like daf-7 secretion in the ASI neuron, thereby promoting larval development and inhibition of dauer diapause. The chain is Guanine nucleotide-binding protein alpha-4 subunit (gpa-4) from Caenorhabditis elegans.